We begin with the raw amino-acid sequence, 251 residues long: MAVHLLIVDALNLIRRVHAVQGSPCVETCQHALDQLIMHSQPTHAVAVFDDENRSSGWRHQRLPDYKAGRPPMPEELHDEMPALRTAFEQRGVPCWSASGNEADDLAATLAVKVTQAGHQATIVSTDKGYCQLLSPTLRIRDYFQKRWLDAPFIDKEFGVQPQQLPDYWGLAGISSSKVPGVAGIGPKSATQLLVEFQSLEGIYENLDAVAEKWRKKLETHKEMAFLCRDIARLQTDLHIDGNLQQLRLVR.

Residue Asp104 coordinates Mg(2+). The 5'-3' exonuclease domain occupies 160–249 (VQPQQLPDYW…IDGNLQQLRL (90 aa)). Positions 171, 172, 180, 182, and 185 each coordinate K(+). The interval 184 to 189 (GIGPKS) is interaction with DNA.

The protein belongs to the Xni family. The cofactor is Mg(2+). Requires K(+) as cofactor.

In terms of biological role, has flap endonuclease activity. During DNA replication, flap endonucleases cleave the 5'-overhanging flap structure that is generated by displacement synthesis when DNA polymerase encounters the 5'-end of a downstream Okazaki fragment. The protein is Flap endonuclease Xni of Escherichia coli O17:K52:H18 (strain UMN026 / ExPEC).